Consider the following 333-residue polypeptide: Nucleoid-associated protein VC0395_A1624/VC395_2154 (333 aa).

This sequence belongs to the YejK family.

It localises to the cytoplasm. The protein localises to the nucleoid. The sequence is that of Nucleoid-associated protein VC0395_A1624/VC395_2154 from Vibrio cholerae serotype O1 (strain ATCC 39541 / Classical Ogawa 395 / O395).